We begin with the raw amino-acid sequence, 331 residues long: Aldo-keto reductase YhdN (331 aa).

NADP(+) contacts are provided by residues 20-21 and aspartate 52; that span reads TW. Catalysis depends on tyrosine 57, which acts as the Proton donor. NADP(+) contacts are provided by residues glutamine 175, 203-208, lysine 214, arginine 227, 280-282, and glutamine 286; these read YGSLCR and GAR.

Belongs to the aldo/keto reductase family. Aldo/keto reductase 11 subfamily. As to quaternary structure, monomer.

Functionally, aldo-keto reductase (AKR) that displays broad substrate specificity in vitro. Is able to reduce the standard AKR substrates DL-glyceraldehyde, D-erythrose, methylglyoxal, p-nitrobenzaldehyde, benzaldehyde and butyraldehyde, in the presence of NADPH. Cannot use NADH as a cosubstrate. Does not act on glucose, 2-pyridine carboxyaldehyde, fructose and xylose. The physiological function of this enzyme is not clear. May play a role in bacterial stress response and/or in detoxification of reactive aldehydes. The protein is Aldo-keto reductase YhdN (yhdN) of Bacillus subtilis (strain 168).